The primary structure comprises 1706 residues: MGIQLSTIQTPQFHELFEEELPEYHNERSLGDSHFLRTFRMQDRKGYDVLIKVFVNKLPEISLSSIVNLLKEEQENISYRVPNAVPYIKTLVTLRAAYLVRPYVTHNLYDRISTRPFLELTEKKWIMFQLLKGISDCHRLGVCHGDIKSENILITSWNWAYLSDFSSFKPTYLPEDNPADYGYFFDTSSRRVCNIAPERFVPASQLQPAPLSPAMDIFSLGCVFAELLLEESPLFTLSQLFSYKAHGSYDLQSVLEQIEDKSTQNMILSMLDRDPSQRLSADAYLQKYRGTVFPACFYDTLYDYCIGLVDPSGILSAKQPNDACSLYGSRIDDIYRDIMPPNNNDISNLMHTPHEYNGIDSYSVPLFTTLDEFYNKNPAAKNWYLRLYNTMQEKKGFEDKEQGSTPAPSPSVIEDISSIETDENHLYGAAVLLPIVLSTIRHVNTRESKINALSLVQILSRNICDESKLDTVLPFVMTLLRDQYADVRISALITITRLVSNVTSIAPINAFLFQEYLFPDLQHFLFDMNSRTRATYASCLPILAKQASKFLNLAQSLRNAGILSFPESEYENINHGKAELLFETGRHDLVVTVERHVSTLLADSSSIVRRSLLNALAPLCVFFGKAKSNDLILSHLITYLNDTDWMLRCAFFESITGLSIFIGPRSVDEYILPLMLQALVDPEPAVLESVLGSFSGLIELHLFEKLVVVDILQLVLPLVAVPNAYIRRAALSVIYSAYQSFDDIDRDCIVTPLLRPYLMSNLCDINSLEKLDQFILPMVSDSVWSTLTRWYEESENSSFWKCDKDASYSSLDVSNDSLLGRTKNLQKREIMHHAEVYTHKKISLTGHVIITSTEMLELSEDDQKWADIIKEMGVDVKHLWVLANLRDYVKKTKINLNGINYKRQSGLRELNTYPNAPLHILPETIFWNPERPPSSSIANETFLDRNSYAESIQTSRSYNDDLIARDPIAYVGTDMTNAFGTTTKPKDVSQSDIKVDINRESNSDNGETITGTHDVYRQTDNPEIKLPSDTASSKVDTHNPTVTQPTDDTGGLNSYNTENPLLTNNTLEPSSVEAIVSSKDSDKHAKESKGKSLAPLISSRVSTNDTTNVAGIRSQRSFTTHIDLKKLTTRQNGAKKSSYTGTNPCVLNYLNKIYAEAAASTLNVGAAVSPSWASNIPLRRRTKVSAKAANKIVQTHEWHPEGSRVAQIYLGSLLDGGTKKVLVSPDSSFFVTLGSDGVVRAWQLVESVRHISTMRCECRLSYGHTRRNGERNRFSVVNGCFLGNTYAFASVTQDGSVEVHRLDVNNQRHTLISAGRIPNLDFSDSVTSMEASTFHDGSIRLVVVTKWSRIVYLDVGMMRVLSSDQLPLQCGSATSVVVSEGCNWALIGTTKGWLLLWDLRFGTLSCSWHMPARIDQMHLLLDVTKKRSNVNEYTSGNNNSPVTKVPGSSSTSSSSTQPINSTIPINPLENHGMLNSFGSTTVSISFSVLTNLDNKEVNLEDAVPASHRSASGIVNFDVEKGKTEEVFLENWNSSLTSPIPVSVGIDAFNEKKKFDIDSGNDMGLRDLNTKFDSPWPCISSPIYRYRGPSAGSVEREPLFLIAASGSPHAFIWNPHNVSASSSVTNDSESSKLSLIHNKPPIYQKVSEQQNVRPKSSGVSRPLLFLQQQKNLPSENRLHPIVDMAFLYQPYAIVLIVDAFGSLELWT.

The Protein kinase domain maps to 24 to 293; sequence YHNERSLGDS…YLQKYRGTVF (270 aa). ATP contacts are provided by residues 30-38 and K52; that span reads LGDSHFLRT. The HEAT 1 repeat unit spans residues 56–94; that stretch reads NKLPEISLSSIVNLLKEEQENISYRVPNAVPYIKTLVTL. The active-site Proton acceptor is the D146. 7 HEAT repeats span residues 426–465, 466–504, 511–549, 587–625, 626–664, 665–703, and 705–743; these read LYGA…NICD, ESKL…NVTS, FLFQ…QASK, HDLV…FFGK, AKSN…FIGP, RSVD…LHLF, and KLVV…SFDD. At S957 the chain carries Phosphoserine. The residue at position 958 (Y958) is a Phosphotyrosine. The interval 982 to 1099 is disordered; the sequence is TTKPKDVSQS…GKSLAPLISS (118 aa). 2 stretches are compositionally biased toward basic and acidic residues: residues 984–1002 and 1014–1023; these read KPKD…RESN and DVYRQTDNPE. The segment covering 1029-1055 has biased composition (polar residues); it reads DTASSKVDTHNPTVTQPTDDTGGLNSY. The span at 1056–1069 shows a compositional bias: low complexity; the sequence is NTENPLLTNNTLEP. Over residues 1079 to 1090 the composition is skewed to basic and acidic residues; it reads KDSDKHAKESKG. WD repeat units lie at residues 1213–1252 and 1368–1407; these read LLDG…RHIS and LQCG…LSCS. Positions 1431-1442 are enriched in polar residues; the sequence is NEYTSGNNNSPV. The tract at residues 1431–1461 is disordered; it reads NEYTSGNNNSPVTKVPGSSSTSSSSTQPINS. The stretch at 1577–1622 is one WD 3 repeat; the sequence is CISSPIYRYRGPSAGSVEREPLFLIAASGSPHAFIWNPHNVSASSS.

This sequence belongs to the protein kinase superfamily. Ser/Thr protein kinase family. In terms of assembly, component of the autophagy-specific vps34 PI3-kinase complex I composed of vps15, atg6, pik3/vps34, atg14 and atg38. Also a component of the vps34 PI3-kinase complex II composed of atg6, pik3, vps15 and vps38.

The enzyme catalyses L-seryl-[protein] + ATP = O-phospho-L-seryl-[protein] + ADP + H(+). It catalyses the reaction L-threonyl-[protein] + ATP = O-phospho-L-threonyl-[protein] + ADP + H(+). Its function is as follows. Functions as a part of the autophagy-specific VPS34 PI3-kinase complex I that plays a role in autophagosome assembly. This complex is essential to recruit the atg8-phosphatidylinositol conjugate and the atg12-atg5 conjugate to the pre-autophagosomal structure. Also functions as part of the VPS34 PI3-kinase complex II. This Schizosaccharomyces pombe (strain 972 / ATCC 24843) (Fission yeast) protein is Serine/threonine-protein kinase vps15.